The primary structure comprises 358 residues: Cholesterol galactosyltransferase (358 aa).

It belongs to the glycosyltransferase 2 family.

The enzyme catalyses cholesterol + UDP-alpha-D-galactose = cholesteryl 3-beta-D-galactoside + UDP + H(+). Its pathway is glycolipid biosynthesis. Functionally, galactosyltransferase involved in the synthesis of cholesterol glycolipids, which are formed by the use of host-derived cholesterol and have been shown to be immunogenic, and possibly contribute to Lyme disease pathogenesis. Catalyzes the formation of cholesteryl beta-D-galactopyranoside (CGal) from cholesterol and UDP-alpha-D-galactose. Cannot use GDP-mannose. The chain is Cholesterol galactosyltransferase from Borreliella burgdorferi (strain ATCC 35210 / DSM 4680 / CIP 102532 / B31) (Borrelia burgdorferi).